The following is a 159-amino-acid chain: Ribosomal RNA large subunit methyltransferase H (159 aa).

S-adenosyl-L-methionine-binding positions include Leu-76, Gly-108, and 127–132 (FSKMTF).

This sequence belongs to the RNA methyltransferase RlmH family. Homodimer.

Its subcellular location is the cytoplasm. The catalysed reaction is pseudouridine(1915) in 23S rRNA + S-adenosyl-L-methionine = N(3)-methylpseudouridine(1915) in 23S rRNA + S-adenosyl-L-homocysteine + H(+). Its function is as follows. Specifically methylates the pseudouridine at position 1915 (m3Psi1915) in 23S rRNA. The polypeptide is Ribosomal RNA large subunit methyltransferase H (Exiguobacterium sibiricum (strain DSM 17290 / CCUG 55495 / CIP 109462 / JCM 13490 / 255-15)).